Reading from the N-terminus, the 156-residue chain is Urease accessory protein UreE (156 aa).

The disordered stretch occupies residues 133-156; it reads RPESGAYGSGRTMGHDHGPFHVHA. Positions 145–156 are enriched in basic and acidic residues; that stretch reads MGHDHGPFHVHA.

This sequence belongs to the UreE family.

The protein resides in the cytoplasm. Functionally, involved in urease metallocenter assembly. Binds nickel. Probably functions as a nickel donor during metallocenter assembly. In Rhodobacter capsulatus (Rhodopseudomonas capsulata), this protein is Urease accessory protein UreE.